Here is a 68-residue protein sequence, read N- to C-terminus: Alpha-conotoxin Lp1.1 (68 aa).

The signal sequence occupies residues 1-21 (MGMRMMFIMFMLVVLATTVVT). Positions 22 to 48 (FTSDRALDAMNAAASNKASRLIALAVR) are excised as a propeptide. 2 disulfide bridges follow: Cys50-Cys56 and Cys51-Cys64. Positions 52 to 54 (ARA) are lacks the Ser-Xaa-Pro motif that is crucial for potent interaction with nAChR. A Glycine amide modification is found at Gly65. Positions 66–68 (GGR) are excised as a propeptide.

It belongs to the conotoxin A superfamily. In terms of tissue distribution, expressed by the venom duct.

The protein resides in the secreted. Its function is as follows. Alpha-conotoxins act on postsynaptic membranes, they bind to the nicotinic acetylcholine receptors (nAChR) and thus inhibit them. Synthetic peptide inhibits alpha-6/alpha-3/beta-2 and alpha-3/beta-2 nicotinic acetylcholine receptors and causes uncoordinated movement when intramuscularly injected into goldfish. Has a distinct nAChR binding mode from other alpha-conotoxins, due to a different three residue motif (Ala-Xaa-Ala instead of the conserved Ser-Xaa-Pro motif). The polypeptide is Alpha-conotoxin Lp1.1 (Conus leopardus (Leopard cone)).